Here is an 82-residue protein sequence, read N- to C-terminus: MVRIRLARGGCKKSPFYYIVVTDSRNSRDGRFIERIGFFNPVELDIKKRLRVNLDRVRYWLSNGAQPSDRVFVLIKWSKNVY.

The protein belongs to the bacterial ribosomal protein bS16 family.

This chain is Small ribosomal subunit protein bS16, found in Blochmanniella floridana.